We begin with the raw amino-acid sequence, 656 residues long: Broad substrate specificity ATP-binding cassette transporter ABCG2 (656 aa).

The tract at residues 1–25 (MSSNSYQVSIPMSKRNTNGLPGSSS) is disordered. Over 1-394 (MSSNSYQVSI…SFKNLLGNPQ (394 aa)) the chain is Cytoplasmic. An ABC transporter domain is found at 37–286 (LSFHDICYRV…FASIGYNCEP (250 aa)). ATP contacts are provided by residues 80–87 (GPTGGGKS), 184–190 (RGVSGGE), glutamate 211, and histidine 243. Positions 390–652 (LGNPQASVAQ…TIAYLKLLLL (263 aa)) constitute an ABC transmembrane type-2 domain. A helical transmembrane segment spans residues 395 to 415 (ASVAQIIVTIILGLVIGAIFY). Residues 416-429 (DLKNDPSGIQNRAG) are Extracellular-facing. Residues 430 to 450 (VLFFLTTNQCFSSVSAVELLV) traverse the membrane as a helical segment. The Cytoplasmic portion of the chain corresponds to 451 to 478 (VEKKLFIHEYISGYYRVSSYFFGKLLSD). A helical transmembrane segment spans residues 479-498 (LLPMRMLPSIIFTCITYFLL). Topologically, residues 499-507 (GLKPAVGSF) are extracellular. Residues 508–530 (FIMMFTLMMVAYSASSMALAIAA) form a helical membrane-spanning segment. Topologically, residues 531–536 (GQSVVS) are cytoplasmic. The chain crosses the membrane as a helical span at residues 537–557 (VATLLMTISFVFMMIFSGLLV). The Extracellular segment spans residues 558–631 (NLKTVVPWLS…LSAWGLWQNH (74 aa)). Cysteine 593 and cysteine 609 are disulfide-bonded. N-linked (GlcNAc...) asparagine glycosylation is found at asparagine 597 and asparagine 601. Residues 632–652 (VALACMMVIFLTIAYLKLLLL) traverse the membrane as a helical segment. Residues 653–656 (KKYS) are Cytoplasmic-facing.

It belongs to the ABC transporter superfamily. ABCG family. Eye pigment precursor importer (TC 3.A.1.204) subfamily. Homodimer; disulfide-linked. The minimal functional unit is a homodimer, but the major oligomeric form in plasma membrane is a homotetramer with possibility of higher order oligomerization up to homododecamers. In terms of processing, N-glycosylated. Glycosylation-deficient ABCG2 is normally expressed and functional. Post-translationally, phosphorylated. Phosphorylation may regulate the localization to the plasma membrane, the homooligomerization and therefore, the activity of the transporter. High expression in brain, kidney and lung. Also expressed in livere, colon, small intestine, heart, skeletal muscle, spleen, stomach and pancreas.

It localises to the cell membrane. The protein resides in the apical cell membrane. It is found in the mitochondrion membrane. It carries out the reaction ATP + H2O + xenobioticSide 1 = ADP + phosphate + xenobioticSide 2.. The catalysed reaction is urate(in) + ATP + H2O = urate(out) + ADP + phosphate + H(+). It catalyses the reaction indoxyl sulfate(in) + ATP + H2O = indoxyl sulfate(out) + ADP + phosphate + H(+). The enzyme catalyses sphing-4-enine 1-phosphate(in) + ATP + H2O = sphing-4-enine 1-phosphate(out) + ADP + phosphate + H(+). It carries out the reaction estrone 3-sulfate(in) + ATP + H2O = estrone 3-sulfate(out) + ADP + phosphate + H(+). The catalysed reaction is dehydroepiandrosterone 3-sulfate(in) + ATP + H2O = dehydroepiandrosterone 3-sulfate(out) + ADP + phosphate + H(+). It catalyses the reaction 4-methylumbelliferone sulfate(in) + ATP + H2O = 4-methylumbelliferone sulfate(out) + ADP + phosphate + H(+). The enzyme catalyses 5,7-dimethyl-2-methylamino-4-(3-pyridylmethyl)-1,3-benzothiazol-6-yl beta-D-glucuronate(in) + ATP + H2O = 5,7-dimethyl-2-methylamino-4-(3-pyridylmethyl)-1,3-benzothiazol-6-yl beta-D-glucuronate(out) + ADP + phosphate + H(+). It carries out the reaction 4-methylumbelliferone beta-D-glucuronate(in) + ATP + H2O = 4-methylumbelliferone beta-D-glucuronate(out) + ADP + phosphate + H(+). The catalysed reaction is 5,7-dimethyl-2-methylamino-4-(3-pyridylmethyl)-1,3-benzothiazol-6-yl sulfate(in) + ATP + H2O = 5,7-dimethyl-2-methylamino-4-(3-pyridylmethyl)-1,3-benzothiazol-6-yl sulfate(out) + ADP + phosphate + H(+). It catalyses the reaction 17beta-estradiol 17-O-(beta-D-glucuronate)(in) + ATP + H2O = 17beta-estradiol 17-O-(beta-D-glucuronate)(out) + ADP + phosphate + H(+). The enzyme catalyses methotrexate(in) + ATP + H2O = methotrexate(out) + ADP + phosphate + H(+). It carries out the reaction riboflavin(in) + ATP + H2O = riboflavin(out) + ADP + phosphate + H(+). The catalysed reaction is pheophorbide a(in) + ATP + H2O = pheophorbide a(out) + ADP + phosphate + H(+). It catalyses the reaction itaconate(in) + ATP + H2O = itaconate(out) + ADP + phosphate + H(+). In terms of biological role, broad substrate specificity ATP-dependent transporter of the ATP-binding cassette (ABC) family that actively extrudes a wide variety of physiological compounds, dietary toxins and xenobiotics from cells. Involved in porphyrin homeostasis, mediating the export of protoporphyrin IX (PPIX) from both mitochondria to cytosol and cytosol to extracellular space, it also functions in the cellular export of heme. Also mediates the efflux of sphingosine-1-P from cells. Acts as a urate exporter functioning in both renal and extrarenal urate excretion. In kidney, it also functions as a physiological exporter of the uremic toxin indoxyl sulfate. Also involved in the excretion of steroids like estrone 3-sulfate/E1S, 3beta-sulfooxy-androst-5-en-17-one/DHEAS, and other sulfate conjugates. Mediates the secretion of the riboflavin and biotin vitamins into milk. Extrudes pheophorbide a, a phototoxic porphyrin catabolite of chlorophyll, reducing its bioavailability. Plays an important role in the exclusion of xenobiotics from the brain. It confers to cells a resistance to multiple drugs and other xenobiotics including mitoxantrone, pheophorbide, camptothecin, methotrexate, azidothymidine, and the anthracyclines daunorubicin and doxorubicin, through the control of their efflux. In placenta, it limits the penetration of drugs from the maternal plasma into the fetus. May play a role in early stem cell self-renewal by blocking differentiation. In inflammatory macrophages, exports itaconate from the cytosol to the extracellular compartment and limits the activation of TFEB-dependent lysosome biogenesis involved in antibacterial innate immune response. The polypeptide is Broad substrate specificity ATP-binding cassette transporter ABCG2 (ABCG2) (Sus scrofa (Pig)).